The sequence spans 95 residues: UPF0223 protein Bsph_1378 (95 aa).

This sequence belongs to the UPF0223 family.

This Lysinibacillus sphaericus (strain C3-41) protein is UPF0223 protein Bsph_1378.